Reading from the N-terminus, the 247-residue chain is MSAKVWLVGAGPGDPELLTLKAVRALHAADVVLIDDLVNPRVLEHCPDARVITVGKRGGCRSTPQDFIHRLMLAMRAKANAWCDLRAATPCIFGRGGEEALWLRERGVEVELVNGITAGLAGATNCDIPLTLRGVSRGVTLVTAHTQDDSSLNWRALAEGGTTLVVYMGVAKLEEIRQQLLEGAMAADTPVAMIENASLPQQRECRSTLAHMHTDAQVFALKSPAILVIGSVAGAGQAASITVSASA.

Residues Pro12, 117-118, Met168, Ala197, and Ala225 contribute to the S-adenosyl-L-homocysteine site; that span reads TA.

The protein belongs to the precorrin methyltransferase family.

It catalyses the reaction uroporphyrinogen III + 2 S-adenosyl-L-methionine = precorrin-2 + 2 S-adenosyl-L-homocysteine + H(+). The protein operates within cofactor biosynthesis; adenosylcobalamin biosynthesis; precorrin-2 from uroporphyrinogen III: step 1/1. Its pathway is porphyrin-containing compound metabolism; siroheme biosynthesis; precorrin-2 from uroporphyrinogen III: step 1/1. Catalyzes the two successive C-2 and C-7 methylation reactions involved in the conversion of uroporphyrinogen III to precorrin-2 via the intermediate formation of precorrin-1. It is a step in the biosynthesis of both cobalamin (vitamin B12) and siroheme. This is Uroporphyrinogen-III C-methyltransferase from Pseudomonas fluorescens.